A 75-amino-acid polypeptide reads, in one-letter code: MSQQQGYYQQGPPQQGYYQQGPPQQGYYQQGPPQQGYPQQQPVYVQQGQPKEESCLDSCLKCLCCCFLLELVCDN.

The tract at residues Met-1 to Val-43 is disordered. 3 repeat units span residues Gln-4–Pro-13, Gln-14–Pro-23, and Gln-24–Pro-33. Residues Gln-4–Pro-33 form a 3 X 10 AA tandem repeats of Q-Q-G-Y-Y-Q-Q-G-P-P region.

The protein belongs to the CYSTM1 family. In terms of processing, palmitoylated near the C-terminus.

The protein resides in the cell membrane. This is Lipid-anchored plasma membrane protein CPP2 from Saccharomyces cerevisiae (strain ATCC 204508 / S288c) (Baker's yeast).